We begin with the raw amino-acid sequence, 64 residues long: DNA-directed RNA polymerase subunit Rpo10 (64 aa).

Zn(2+)-binding residues include cysteine 7, cysteine 10, cysteine 45, and cysteine 46.

It belongs to the archaeal Rpo10/eukaryotic RPB10 RNA polymerase subunit family. Part of the RNA polymerase complex. Zn(2+) is required as a cofactor.

The protein localises to the cytoplasm. It carries out the reaction RNA(n) + a ribonucleoside 5'-triphosphate = RNA(n+1) + diphosphate. Its function is as follows. DNA-dependent RNA polymerase (RNAP) catalyzes the transcription of DNA into RNA using the four ribonucleoside triphosphates as substrates. The polypeptide is DNA-directed RNA polymerase subunit Rpo10 (Natronomonas pharaonis (strain ATCC 35678 / DSM 2160 / CIP 103997 / JCM 8858 / NBRC 14720 / NCIMB 2260 / Gabara) (Halobacterium pharaonis)).